Consider the following 278-residue polypeptide: NAD kinase (278 aa).

Residue D56 is the Proton acceptor of the active site. NAD(+) contacts are provided by residues D56–G57, N132–E133, R158, D160, and T171–S176.

This sequence belongs to the NAD kinase family. It depends on a divalent metal cation as a cofactor.

The protein resides in the cytoplasm. It catalyses the reaction NAD(+) + ATP = ADP + NADP(+) + H(+). Functionally, involved in the regulation of the intracellular balance of NAD and NADP, and is a key enzyme in the biosynthesis of NADP. Catalyzes specifically the phosphorylation on 2'-hydroxyl of the adenosine moiety of NAD to yield NADP. This Streptococcus agalactiae serotype III (strain NEM316) protein is NAD kinase.